We begin with the raw amino-acid sequence, 442 residues long: Alpha-1,6-mannosyl-glycoprotein 2-beta-N-acetylglucosaminyltransferase (442 aa).

Residues 1–9 are Cytoplasmic-facing; sequence MRFRIYKRK. The helical; Signal-anchor for type II membrane protein transmembrane segment at 10 to 29 threads the bilayer; that stretch reads VLILTLVVAACGFVLWSSNG. At 30 to 442 the chain is on the lumenal side; it reads RQRKNDALAP…ELCKSYRRLQ (413 aa). N-linked (GlcNAc...) asparagine glycosylation is found at Asn64 and Asn81. Substrate is bound by residues 118-122 and Asp149; that span reads QVHNR. Cys191 and Cys205 are oxidised to a cystine. 224–228 contacts substrate; it reads QTKHH. Asp256 lines the Mn(2+) pocket. Residues Cys278 and Cys281 are joined by a disulfide bond. Arg293 is a substrate binding site. Intrachain disulfides connect Cys329-Cys352, Cys334-Cys435, and Cys373-Cys381. His369 contacts Mn(2+).

Belongs to the glycosyltransferase 16 (GT16) protein family. In terms of assembly, homodimer. It depends on Mn(2+) as a cofactor. Detected in liver (at protein level). Detected in liver, brain, thymus and spleen.

The protein localises to the golgi apparatus membrane. The enzyme catalyses an N(4)-{beta-D-GlcNAc-(1-&gt;2)-alpha-D-Man-(1-&gt;3)-[alpha-D-Man-(1-&gt;6)]-beta-D-Man-(1-&gt;4)-beta-D-GlcNAc-(1-&gt;4)-beta-D-GlcNAc}-L-asparaginyl-[protein] + UDP-N-acetyl-alpha-D-glucosamine = N(4)-{beta-D-GlcNAc-(1-&gt;2)-alpha-D-Man-(1-&gt;3)-[beta-D-GlcNAc-(1-&gt;2)-alpha-D-Man-(1-&gt;6)]-beta-D-Man-(1-&gt;4)-beta-D-GlcNAc-(1-&gt;4)-beta-D-GlcNAc}-L-asparaginyl-[protein] + UDP + H(+). Its pathway is protein modification; protein glycosylation. Its function is as follows. Plays an essential role in protein N-glycosylation. Catalyzes the transfer of N-acetylglucosamine (GlcNAc) onto the free terminal mannose moiety in the core structure of the nascent N-linked glycan chain, giving rise to the second branch in complex glycans. This chain is Alpha-1,6-mannosyl-glycoprotein 2-beta-N-acetylglucosaminyltransferase (Mgat2), found in Rattus norvegicus (Rat).